The sequence spans 562 residues: Phosphopantothenoylcysteine decarboxylase subunit SIS2 (562 aa).

Polar residues predominate over residues 1-10 (MTAVASTSGK). Disordered regions lie at residues 1 to 63 (MTAV…SNAT), 97 to 165 (FSDL…KDYD), and 490 to 562 (GYPK…DKHQ). The segment covering 27–42 (GQKEILLDHEDAKGKD) has biased composition (basic and acidic residues). Composition is skewed to polar residues over residues 44-63 (IINS…SNAT) and 99-113 (DLKQ…TQLK). A phosphoserine mark is found at Ser-47, Ser-50, Ser-54, and Ser-56. Residues 121-134 (SPNSNPAPVSNSIP) are compositionally biased toward low complexity. Positions 142–156 (NHTNTSRTTQLSGSP) are enriched in polar residues. Phosphoserine is present on Ser-155. The segment covering 496–553 (EEEDDDEDEEEDDDEEEDTEDKNENNNDDDDDDDDDDDDDDDDDDDDDDDDEDEDEAE) has biased composition (acidic residues).

Belongs to the HFCD (homooligomeric flavin containing Cys decarboxylase) superfamily. In terms of assembly, interacts with the C-terminal domain of PPZ1. Component of the phosphopantothenoylcysteine decarboxylase (PPCDC) complex, a heterotrimer composed of CAB3, SIS2 and VHS3.

It localises to the nucleus. Its subcellular location is the cytoplasm. Component of the phosphopantothenoylcysteine decarboxylase (PPCDC) involved in the coenzyme A synthesis. Acts as an inhibitory subunit of protein phosphatase PPZ1, which is involved in many cellular processes such as G1-S transition or salt tolerance. Also modulates the expression of the ENA1 ATPase. This is Phosphopantothenoylcysteine decarboxylase subunit SIS2 (SIS2) from Saccharomyces cerevisiae (strain ATCC 204508 / S288c) (Baker's yeast).